The sequence spans 390 residues: Pyruvate dehydrogenase E1 component subunit alpha-1, mitochondrial (390 aa).

A mitochondrion-targeting transit peptide spans 1–15 (MAAAILLRRVPPARA). 10 residues coordinate pyruvate: histidine 91, tyrosine 117, arginine 118, glycine 166, valine 168, aspartate 197, glycine 198, alanine 199, asparagine 226, and tyrosine 228. Thiamine diphosphate contacts are provided by tyrosine 117, arginine 118, glycine 166, valine 168, aspartate 197, glycine 198, alanine 199, and asparagine 226. Mg(2+) is bound at residue aspartate 197. Mg(2+) is bound by residues asparagine 226 and tyrosine 228. Residue histidine 292 participates in thiamine diphosphate binding. The interval 293–312 (SMSDPGSTYRTRDEISGVRQ) is disordered. A compositionally biased stretch (basic and acidic residues) spans 302 to 312 (RTRDEISGVRQ).

In terms of assembly, tetramer of 2 alpha and 2 beta subunits. Thiamine diphosphate serves as cofactor. Mg(2+) is required as a cofactor.

It is found in the mitochondrion matrix. The catalysed reaction is N(6)-[(R)-lipoyl]-L-lysyl-[protein] + pyruvate + H(+) = N(6)-[(R)-S(8)-acetyldihydrolipoyl]-L-lysyl-[protein] + CO2. Functionally, the pyruvate dehydrogenase complex catalyzes the overall conversion of pyruvate to acetyl-CoA and CO(2). It contains multiple copies of three enzymatic components: pyruvate dehydrogenase (E1), dihydrolipoamide acetyltransferase (E2) and lipoamide dehydrogenase (E3). The protein is Pyruvate dehydrogenase E1 component subunit alpha-1, mitochondrial of Oryza sativa subsp. japonica (Rice).